The following is a 208-amino-acid chain: Cytidylate kinase (208 aa).

9-17 (GPSASGKSS) contacts ATP.

Belongs to the cytidylate kinase family. Type 1 subfamily.

The protein resides in the cytoplasm. The enzyme catalyses CMP + ATP = CDP + ADP. It catalyses the reaction dCMP + ATP = dCDP + ADP. This chain is Cytidylate kinase, found in Thermus thermophilus (strain ATCC BAA-163 / DSM 7039 / HB27).